The sequence spans 508 residues: Steroid 17-alpha-hydroxylase/17,20 lyase (508 aa).

Asn202 provides a ligand contact to substrate. Cys442 contacts heme.

It belongs to the cytochrome P450 family. Requires heme as cofactor.

Its subcellular location is the endoplasmic reticulum membrane. It localises to the microsome membrane. The enzyme catalyses a C21-steroid + reduced [NADPH--hemoprotein reductase] + O2 = a 17alpha-hydroxy-C21-steroid + oxidized [NADPH--hemoprotein reductase] + H2O + H(+). The catalysed reaction is progesterone + reduced [NADPH--hemoprotein reductase] + O2 = 17alpha-hydroxyprogesterone + oxidized [NADPH--hemoprotein reductase] + H2O + H(+). It catalyses the reaction pregnenolone + reduced [NADPH--hemoprotein reductase] + O2 = 17alpha-hydroxypregnenolone + oxidized [NADPH--hemoprotein reductase] + H2O + H(+). It carries out the reaction 17alpha-hydroxyprogesterone + reduced [NADPH--hemoprotein reductase] + O2 = androst-4-ene-3,17-dione + acetate + oxidized [NADPH--hemoprotein reductase] + H2O + 2 H(+). The enzyme catalyses 17alpha-hydroxyprogesterone + reduced [NADPH--hemoprotein reductase] + O2 = 16alpha,17alpha-dihydroxyprogesterone + oxidized [NADPH--hemoprotein reductase] + H2O + H(+). The catalysed reaction is 16alpha,17alpha-dihydroxyprogesterone + reduced [NADPH--hemoprotein reductase] + O2 = 6beta,16alpha,17alpha-trihydroxyprogesterone + oxidized [NADPH--hemoprotein reductase] + H2O + H(+). It catalyses the reaction 17alpha-hydroxypregnenolone + reduced [NADPH--hemoprotein reductase] + O2 = 3beta-hydroxyandrost-5-en-17-one + acetate + oxidized [NADPH--hemoprotein reductase] + H2O + 2 H(+). It carries out the reaction 16alpha,17alpha-dihydroxypregnenolone + reduced [NADPH--hemoprotein reductase] + O2 = 3beta,16alpha-dihydroxy-androst-5-en-17-one + acetate + oxidized [NADPH--hemoprotein reductase] + H2O + 2 H(+). The enzyme catalyses 3beta-hydroxyandrost-5-en-17-one + reduced [NADPH--hemoprotein reductase] + O2 = 3beta,16alpha-dihydroxy-androst-5-en-17-one + oxidized [NADPH--hemoprotein reductase] + H2O + H(+). The catalysed reaction is androst-4-ene-3,17-dione + reduced [NADPH--hemoprotein reductase] + O2 = 16alpha-hydroxyandrost-4-ene-3,17-dione + oxidized [NADPH--hemoprotein reductase] + H2O + H(+). It functions in the pathway steroid hormone biosynthesis. The protein operates within steroid biosynthesis; glucocorticoid biosynthesis. With respect to regulation, regulated predominantly by intracellular cAMP levels. The 17,20-lyase activity is stimulated by cytochrome b5, which acts as an allosteric effector increasing the Vmax of the lyase activity. In terms of biological role, a cytochrome P450 monooxygenase involved in corticoid and androgen biosynthesis. Catalyzes 17-alpha hydroxylation of C21 steroids, which is common for both pathways. A second oxidative step, required only for androgen synthesis, involves an acyl-carbon cleavage. The 17-alpha hydroxy intermediates, as part of adrenal glucocorticoids biosynthesis pathway, are precursors of cortisol. Hydroxylates steroid hormones, pregnenolone and progesterone to form 17-alpha hydroxy metabolites, followed by the cleavage of the C17-C20 bond to form C19 steroids, dehydroepiandrosterone (DHEA) and androstenedione. Has 16-alpha hydroxylase activity. Catalyzes 16-alpha hydroxylation of 17-alpha hydroxy pregnenolone, followed by the cleavage of the C17-C20 bond to form 16-alpha-hydroxy DHEA. Also 16-alpha hydroxylates androgens, relevant for estriol synthesis. Mechanistically, uses molecular oxygen inserting one oxygen atom into a substrate, and reducing the second into a water molecule, with two electrons provided by NADPH via cytochrome P450 reductase (CPR; NADPH-ferrihemoprotein reductase). The protein is Steroid 17-alpha-hydroxylase/17,20 lyase (CYP17A1) of Macaca fascicularis (Crab-eating macaque).